Consider the following 348-residue polypeptide: Growth-regulating factor 5 (348 aa).

In terms of domain architecture, QLQ spans 24-59 (VFTAAQWAELEQQALIYKYLVAGVPVPGDLLLPIRP). Short sequence motifs (bipartite nuclear localization signal) lie at residues 94 to 112 (KKLD…KKWR) and 130 to 137 (RGRNRSRK). The WRC domain occupies 97 to 141 (DPEPWRCRRTDGKKWRCSKEAHPDSKYCERHMHRGRNRSRKPVES). Disordered regions lie at residues 125–165 (ERHM…HDTD) and 306–348 (LRPF…PRCD). Positions 127–136 (HMHRGRNRSR) are enriched in basic residues. Residues 148–161 (PQSQPQLSNVTTAT) are compositionally biased toward polar residues. Over residues 306–320 (LRPFFDEWPGRRDSW) the composition is skewed to basic and acidic residues. The span at 329–340 (NQTSFSTTQLSI) shows a compositional bias: polar residues.

The protein belongs to the GRF family.

It is found in the nucleus. Transcription activator that plays a regulatory role in gibberellin-induced stem elongation. This Oryza sativa subsp. japonica (Rice) protein is Growth-regulating factor 5 (GRF5).